A 681-amino-acid polypeptide reads, in one-letter code: Protein hook (681 aa).

A Calponin-homology (CH) domain is found at 6 to 123 (NEMYYSLLEW…RLLQLVLGCA (118 aa)). 2 coiled-coil regions span residues 135–439 (EIMS…LKCG) and 482–584 (QTAL…KYRK).

It belongs to the hook family. As to quaternary structure, homodimer. Interacts with microtubules via its N-terminus.

It is found in the cytoplasm. Its subcellular location is the cytoskeleton. It localises to the endosome. The protein resides in the synapse. Its function is as follows. Involved in endocytic trafficking by stabilizing organelles of the endocytic pathway. Probably acts as a cytoskeletal linker protein required to tether endosome vesicles to the cytoskeleton. Involved in modulation of endocytosis at stages required for down-regulation of membrane proteins that control synapse size. Not involved in synaptic vesicle recycling. Required in R7 cells for boss endocytosis into multivesicular bodies (MVBs). Has a role in regulating adult longevity. The chain is Protein hook from Drosophila ananassae (Fruit fly).